Reading from the N-terminus, the 671-residue chain is UvrABC system protein B (671 aa).

One can recognise a Helicase ATP-binding domain in the interval 25–412 (EGIDAGLAHQ…AGRIVEQVVR (388 aa)). 38–45 (GVTGSGKT) lines the ATP pocket. A Beta-hairpin motif is present at residues 91–114 (YYDYYQPEAYVPSSDTFIEKDASI). One can recognise a Helicase C-terminal domain in the interval 429-582 (QVDDLLSEIH…QIAFNLEHGI (154 aa)). The disordered stretch occupies residues 601 to 624 (PGSRSKKRKGMAKAAEENARYENE). A compositionally biased stretch (basic and acidic residues) spans 614-624 (AAEENARYENE). The 36-residue stretch at 632–667 (NKRIRQLEEKMYQLARDLEFEAAAQMRDEIGKLRER) folds into the UVR domain.

The protein belongs to the UvrB family. As to quaternary structure, forms a heterotetramer with UvrA during the search for lesions. Interacts with UvrC in an incision complex.

It localises to the cytoplasm. Functionally, the UvrABC repair system catalyzes the recognition and processing of DNA lesions. A damage recognition complex composed of 2 UvrA and 2 UvrB subunits scans DNA for abnormalities. Upon binding of the UvrA(2)B(2) complex to a putative damaged site, the DNA wraps around one UvrB monomer. DNA wrap is dependent on ATP binding by UvrB and probably causes local melting of the DNA helix, facilitating insertion of UvrB beta-hairpin between the DNA strands. Then UvrB probes one DNA strand for the presence of a lesion. If a lesion is found the UvrA subunits dissociate and the UvrB-DNA preincision complex is formed. This complex is subsequently bound by UvrC and the second UvrB is released. If no lesion is found, the DNA wraps around the other UvrB subunit that will check the other stand for damage. The chain is UvrABC system protein B from Pseudomonas syringae pv. syringae (strain B728a).